A 137-amino-acid polypeptide reads, in one-letter code: Ribosome-binding factor A (137 aa).

This sequence belongs to the RbfA family. In terms of assembly, monomer. Binds 30S ribosomal subunits, but not 50S ribosomal subunits or 70S ribosomes.

The protein localises to the cytoplasm. One of several proteins that assist in the late maturation steps of the functional core of the 30S ribosomal subunit. Associates with free 30S ribosomal subunits (but not with 30S subunits that are part of 70S ribosomes or polysomes). Required for efficient processing of 16S rRNA. May interact with the 5'-terminal helix region of 16S rRNA. The chain is Ribosome-binding factor A from Cereibacter sphaeroides (strain KD131 / KCTC 12085) (Rhodobacter sphaeroides).